The primary structure comprises 870 residues: LPS-assembly protein LptD (870 aa).

The N-terminal stretch at 1 to 25 is a signal peptide; that stretch reads MKQGKSFIFYCLVLLLCGFQQLSSA.

It belongs to the LptD family. Component of the lipopolysaccharide transport and assembly complex. Interacts with LptE and LptA.

The protein resides in the cell outer membrane. In terms of biological role, together with LptE, is involved in the assembly of lipopolysaccharide (LPS) at the surface of the outer membrane. The chain is LPS-assembly protein LptD from Coxiella burnetii (strain RSA 493 / Nine Mile phase I).